Here is a 241-residue protein sequence, read N- to C-terminus: MATNAKPVYQRILLKLSGEALQGAEGFGIDASVLDRMAQEVKELVELGIQVGVVIGGGNLFRGAGLAQAGMNRVVGDHMGMLATVMNGLAMRDALHRAYVNARLMSAIPLNGVCDNYSWAEAISLLRHNRVVIFAAGTGNPFFTTDSAACLRGIEIEADVVLKATKVDGVYSADPVKNPDATLYEQLTYQDVLEQELKVMDLAAFTLARDHNLPIRVFNMNKPGALRRVVMGENEGTLIAK.

ATP is bound at residue 15 to 18 (KLSG). The interval 23 to 28 (GAEGFG) is involved in allosteric activation by GTP. Gly-57 lines the UMP pocket. Positions 58 and 62 each coordinate ATP. UMP-binding positions include Asp-77 and 138–145 (TGNPFFTT). Residues Thr-165, Tyr-171, and Asp-174 each contribute to the ATP site.

The protein belongs to the UMP kinase family. In terms of assembly, homohexamer.

Its subcellular location is the cytoplasm. The enzyme catalyses UMP + ATP = UDP + ADP. It participates in pyrimidine metabolism; CTP biosynthesis via de novo pathway; UDP from UMP (UMPK route): step 1/1. Its activity is regulated as follows. Allosterically activated by GTP. Inhibited by UTP. In terms of biological role, catalyzes the reversible phosphorylation of UMP to UDP. In Yersinia pseudotuberculosis serotype O:1b (strain IP 31758), this protein is Uridylate kinase.